A 241-amino-acid polypeptide reads, in one-letter code: Adenosylcobinamide-GDP ribazoletransferase (241 aa).

4 helical membrane-spanning segments follow: residues 34-54, 108-128, 184-206, and 220-240; these read LGLP…AWAF, VGGL…FGWI, LPFS…WTCL, and FLGA…SSLP.

This sequence belongs to the CobS family. Requires Mg(2+) as cofactor.

It is found in the cell membrane. The enzyme catalyses alpha-ribazole + adenosylcob(III)inamide-GDP = adenosylcob(III)alamin + GMP + H(+). It catalyses the reaction alpha-ribazole 5'-phosphate + adenosylcob(III)inamide-GDP = adenosylcob(III)alamin 5'-phosphate + GMP + H(+). It functions in the pathway cofactor biosynthesis; adenosylcobalamin biosynthesis; adenosylcobalamin from cob(II)yrinate a,c-diamide: step 7/7. Joins adenosylcobinamide-GDP and alpha-ribazole to generate adenosylcobalamin (Ado-cobalamin). Also synthesizes adenosylcobalamin 5'-phosphate from adenosylcobinamide-GDP and alpha-ribazole 5'-phosphate. This Methanopyrus kandleri (strain AV19 / DSM 6324 / JCM 9639 / NBRC 100938) protein is Adenosylcobinamide-GDP ribazoletransferase.